We begin with the raw amino-acid sequence, 604 residues long: Netrin-1 (604 aa).

The N-terminal stretch at 1 to 24 (MMRAVWEALAALAAVACLVGAVRG) is a signal peptide. The Laminin N-terminal domain occupies 47–284 (HPRRCIPDFV…AVSDLQVGGR (238 aa)). Residues asparagine 95, asparagine 116, and asparagine 131 are each glycosylated (N-linked (GlcNAc...) asparagine). 15 disulfides stabilise this stretch: cysteine 119-cysteine 152, cysteine 285-cysteine 294, cysteine 287-cysteine 304, cysteine 306-cysteine 315, cysteine 318-cysteine 338, cysteine 341-cysteine 350, cysteine 343-cysteine 368, cysteine 371-cysteine 380, cysteine 383-cysteine 401, cysteine 404-cysteine 416, cysteine 406-cysteine 423, cysteine 425-cysteine 434, cysteine 437-cysteine 451, cysteine 472-residue 544, and cysteine 491-cysteine 601. Laminin EGF-like domains follow at residues 285-340 (CKCN…ECVA), 341-403 (CNCN…ACKA), and 404-453 (CDCH…PCIK). Asparagine 417 is a glycosylation site (N-linked (GlcNAc...) asparagine). One can recognise an NTR domain in the interval 472–601 (CDSYCKASKG…FQQREKKGKC (130 aa)). A Cell attachment site motif is present at residues 530 to 532 (RGD).

In terms of assembly, binds to its receptors; DCC, UNC5A, UNC5B, UNC5C and probably UNC5D. Binds to its receptor; DSCAM. Interacts with APP.

The protein resides in the secreted. It is found in the cytoplasm. In terms of biological role, netrins control guidance of CNS commissural axons and peripheral motor axons. Its association with either DCC or some UNC5 receptors will lead to axon attraction or repulsion, respectively. Binding to UNC5C might cause dissociation of UNC5C from polymerized TUBB3 in microtubules and thereby lead to increased microtubule dynamics and axon repulsion. Involved in dorsal root ganglion axon projection towards the spinal cord. It also serves as a survival factor via its association with its receptors which prevent the initiation of apoptosis. Involved in colorectal tumorigenesis by regulating apoptosis. This Rattus norvegicus (Rat) protein is Netrin-1 (Ntn1).